Reading from the N-terminus, the 904-residue chain is Essential for maintenance of the cell wall protein 1 (904 aa).

TPR repeat units lie at residues 510-544 (WQLDATLAEKYMSLGILKSAVEIYERLGMACETAL), 563-596 (INENDSDARAYSILGDIKQDPSLWEKSWEIGKYV), 603-636 (AKYYFNPPPKSGAQPNYSATLKHLNDSLRQYPLS), 637-670 (FETWYFYGCVGLQCGKMQIAAEAFTRCVSLDPYH), 671-704 (ALSWSNLSAAYTKMDKLKEAYSCLKRAISCDAQK), and 706-739 (WKIWENYMLVAVKLNEWEDVLTACKQLVSIRRDK).

This sequence belongs to the TTC27 family.

It localises to the cytoplasm. Its subcellular location is the nucleus. Its function is as follows. Required for the maintenance of the cell wall integrity. The protein is Essential for maintenance of the cell wall protein 1 (EMW1) of Saccharomyces cerevisiae (strain ATCC 204508 / S288c) (Baker's yeast).